Consider the following 289-residue polypeptide: ATP synthase gamma chain (289 aa).

Belongs to the ATPase gamma chain family. As to quaternary structure, F-type ATPases have 2 components, CF(1) - the catalytic core - and CF(0) - the membrane proton channel. CF(1) has five subunits: alpha(3), beta(3), gamma(1), delta(1), epsilon(1). CF(0) has three main subunits: a, b and c.

It is found in the cell membrane. Functionally, produces ATP from ADP in the presence of a proton gradient across the membrane. The gamma chain is believed to be important in regulating ATPase activity and the flow of protons through the CF(0) complex. This is ATP synthase gamma chain from Mycoplasmoides gallisepticum (strain R(low / passage 15 / clone 2)) (Mycoplasma gallisepticum).